The chain runs to 371 residues: Palmitoyl-monogalactosyldiacylglycerol delta-7 desaturase, chloroplastic (371 aa).

Residues 1–67 (MASLLTKPKP…KGLKRDVTTA (67 aa)) constitute a chloroplast transit peptide. The next 2 membrane-spanning stretches (helical) occupy residues 103–123 (FGAVAVVLSMHLLSLLAPFQF) and 127–147 (AVSVAFGLYIVTGLLGITLSF). Positions 148–153 (HRNLSH) match the Histidine box-1 motif. Residues 185 to 189 (HRYHH) carry the Histidine box-2 motif. Residues 251-271 (ALAVALYAMGGFPFIVWGMGV) form a helical membrane-spanning segment. Residues 317–321 (HNNHH) carry the Histidine box-3 motif.

The protein belongs to the fatty acid desaturase type 1 family. It depends on Fe(2+) as a cofactor. In terms of tissue distribution, highly expressed in young leaves. Low expression in roots.

It localises to the plastid. Its subcellular location is the chloroplast membrane. The enzyme catalyses a 1-acyl-2-hexadecanoyl-glycerolipid + 2 reduced [2Fe-2S]-[ferredoxin] + O2 + 2 H(+) = a 1-acyl-2-[(7Z)-hexadecenoyl]-glycerolipid + 2 oxidized [2Fe-2S]-[ferredoxin] + 2 H2O. Its pathway is lipid metabolism; oxylipin biosynthesis. The protein operates within lipid metabolism; polyunsaturated fatty acid biosynthesis. Its function is as follows. Fatty acid desaturase involved in the first desaturation step leading to the formation of hexadeca 7,10,13-trienoic acid (16:3(7Z,10Z,13Z)), the major functional components of thylakoid membranes. Required for chloroplast biogenesis at low temperature. Also indirectly involved in the production of the oxylipin dinor-oxo-phyto-dienoic acid implicated in wound signaling. In Arabidopsis thaliana (Mouse-ear cress), this protein is Palmitoyl-monogalactosyldiacylglycerol delta-7 desaturase, chloroplastic.